We begin with the raw amino-acid sequence, 489 residues long: MALSSIETALTKHIRSLLQTHFSTKSLKRLACSISLISCLCAGSVLLFALFTPVLQHQLHYTQFQINIIGSFTSIGMYLPLPVLGYLADCHGPVLLSVISVLFFSPGYTLAATVVQNDWSFWYLAISFGLIGCATSALYFTALLTCAKIYPKSKGLTISAPVTCYGLSSLIGSRVLKLSCLQKNGDLDLYRCFKLFSFLYFFLGLFDWVSASVVSIERDVLLRKHEDGENTPLLTDPNQEHENNDDLVPNHKSKFLKFIKDISTYVLLFSLLLSIGPSEMYITNMGSLVKAITPNSLISDQVAIHAVFSTLSRLSLGALSDFLVTNYQISRSWLLLSIIVLGFFTQIFIATSTFVKDQYYIISALSGFSYGGLFTLYPTVIFSIWGPEIFGSAWGSFMIAPAIGSTTFGMVFGLVYDSACGVFAESTTGNCVSLVFLDQLLSIRLQCSTVTHCMEGDLDQKRSLIIINHLHYIKYIYLLILRIHLSRET.

A run of 12 helical transmembrane segments spans residues 34-54 (ISLI…FTPV), 68-88 (IIGS…GYLA), 94-114 (VLLS…AATV), 124-144 (LAIS…TALL), 156-175 (LTIS…GSRV), 196-216 (FSFL…VVSI), 262-282 (ISTY…EMYI), 302-324 (VAIH…DFLV), 335-355 (LLSI…STFV), 359-379 (YYII…LYPT), 403-423 (IGST…CGVF), and 463-483 (SLII…ILRI).

Belongs to the major facilitator superfamily.

Its subcellular location is the vacuole membrane. Functionally, probable transporter. The protein is Probable transporter MCH1 (MCH1) of Wickerhamomyces anomalus (Yeast).